The sequence spans 751 residues: Pyridoxal-dependent decarboxylase domain-containing protein 1 (751 aa).

The tract at residues 659–751 is disordered; it reads QMRKEDSPDS…QEAESVETIR (93 aa). Residues 690-702 show a composition bias toward polar residues; that stretch reads DSISETSSVSQLE. The segment covering 720 to 729 has biased composition (basic and acidic residues); the sequence is PQERPAHILE. Acidic residues predominate over residues 742–751; that stretch reads QEAESVETIR.

It belongs to the group II decarboxylase family. The cofactor is pyridoxal 5'-phosphate.

This is Pyridoxal-dependent decarboxylase domain-containing protein 1 (pdxdc1) from Danio rerio (Zebrafish).